The sequence spans 577 residues: Pentatricopeptide repeat-containing protein At1g63400 (577 aa).

PPR repeat units lie at residues 49 to 83 (GSGD…RPLP), 84 to 118 (SIFE…GISH), 119 to 153 (NLYT…GYEP), 154 to 188 (SIVT…GYRP), 189 to 223 (DTIT…GCQP), 224 to 258 (NLVT…KIEA), 259 to 293 (NVVI…GVRP), 294 to 328 (NVIT…KINP), 329 to 363 (NVVT…SIDP), 364 to 398 (DIFT…DCFP), 399 to 433 (NVVT…GLVG), 434 to 468 (NTVT…GVHP), 469 to 503 (NIMT…KMEP), 504 to 538 (TIYT…GVKP), and 539 to 573 (DVII…GPLP).

The protein belongs to the PPR family. P subfamily.

This is Pentatricopeptide repeat-containing protein At1g63400 from Arabidopsis thaliana (Mouse-ear cress).